Reading from the N-terminus, the 80-residue chain is Large ribosomal subunit protein bL31 (80 aa).

Zn(2+) contacts are provided by C16, C18, C36, and C39.

The protein belongs to the bacterial ribosomal protein bL31 family. Type A subfamily. As to quaternary structure, part of the 50S ribosomal subunit. The cofactor is Zn(2+).

Binds the 23S rRNA. This is Large ribosomal subunit protein bL31 from Methylacidiphilum infernorum (isolate V4) (Methylokorus infernorum (strain V4)).